Reading from the N-terminus, the 127-residue chain is Glycine cleavage system H protein (127 aa).

In terms of domain architecture, Lipoyl-binding spans 22–104 (EVVIGITHFA…YEGAWMVKVE (83 aa)). Lys-63 bears the N6-lipoyllysine mark.

It belongs to the GcvH family. The glycine cleavage system is composed of four proteins: P, T, L and H. Requires (R)-lipoate as cofactor.

Functionally, the glycine cleavage system catalyzes the degradation of glycine. The H protein shuttles the methylamine group of glycine from the P protein to the T protein. Its function is as follows. Is also involved in protein lipoylation via its role as an octanoyl/lipoyl carrier protein intermediate. This is Glycine cleavage system H protein from Bacillus cereus (strain B4264).